We begin with the raw amino-acid sequence, 732 residues long: Catalase-peroxidase (732 aa).

The interval 1–29 (MTTESKCPFSGGGKPNTPRRGPSNQDWWP) is disordered. Positions 96–223 (WHSAGTYRIG…LAAVQMGLIY (128 aa)) form a cross-link, tryptophyl-tyrosyl-methioninium (Trp-Tyr) (with M-249). His-97 (proton acceptor) is an active-site residue. The segment at residues 223-249 (YVNPEGPDGNPDPVAAARDIRETFARM) is a cross-link (tryptophyl-tyrosyl-methioninium (Tyr-Met) (with W-96)). His-264 contacts heme b.

It belongs to the peroxidase family. Peroxidase/catalase subfamily. In terms of assembly, homodimer or homotetramer. It depends on heme b as a cofactor. In terms of processing, formation of the three residue Trp-Tyr-Met cross-link is important for the catalase, but not the peroxidase activity of the enzyme.

It catalyses the reaction H2O2 + AH2 = A + 2 H2O. It carries out the reaction 2 H2O2 = O2 + 2 H2O. In terms of biological role, bifunctional enzyme with both catalase and broad-spectrum peroxidase activity. This Serratia proteamaculans (strain 568) protein is Catalase-peroxidase.